Reading from the N-terminus, the 157-residue chain is Large ribosomal subunit protein eL24 (157 aa).

A Glycyl lysine isopeptide (Lys-Gly) (interchain with G-Cter in SUMO2) cross-link involves residue lysine 2. Glutamate 4 bears the ADP-ribosyl glutamic acid mark. Lysine 27 carries the post-translational modification N6-acetyllysine; alternate. Lysine 27 is covalently cross-linked (Glycyl lysine isopeptide (Lys-Gly) (interchain with G-Cter in SUMO2); alternate). Lysine 35 is covalently cross-linked (Glycyl lysine isopeptide (Lys-Gly) (interchain with G-Cter in SUMO2)). An N6-acetyllysine modification is found at lysine 77. Phosphothreonine is present on threonine 83. Phosphoserine is present on serine 86. Lysine 93 is subject to N6-acetyllysine. The span at 106–117 (EQAIRAAKEAKK) shows a compositional bias: basic and acidic residues. A disordered region spans residues 106 to 157 (EQAIRAAKEAKKAKQASKKTAMAAAKAPTKAAPKQKIVKPVKVSAPRVGGKR). Residues 123–140 (KKTAMAAAKAPTKAAPKQ) show a composition bias toward low complexity. Lysine 131 is modified (N6-succinyllysine). Lysine 147 participates in a covalent cross-link: Glycyl lysine isopeptide (Lys-Gly) (interchain with G-Cter in SUMO2). Serine 149 bears the Phosphoserine mark.

Belongs to the eukaryotic ribosomal protein eL24 family. As to quaternary structure, component of the large ribosomal subunit. Mono-ADP-ribosylation at Glu-4 by PARP16 inhibits polysome assembly and mRNA loading, thereby inhibiting protein translation.

The protein localises to the cytoplasm. Component of the large ribosomal subunit. The ribosome is a large ribonucleoprotein complex responsible for the synthesis of proteins in the cell. The sequence is that of Large ribosomal subunit protein eL24 (RPL24) from Bos taurus (Bovine).